The sequence spans 409 residues: Argininosuccinate synthase (409 aa).

ATP is bound at residue 9–17; sequence AYSGGLDTS. Tyrosine 86 lines the L-citrulline pocket. Glycine 116 is an ATP binding site. Residues threonine 118, asparagine 122, and aspartate 123 each contribute to the L-aspartate site. Asparagine 122 provides a ligand contact to L-citrulline. Positions 126, 174, 183, 259, and 271 each coordinate L-citrulline.

It belongs to the argininosuccinate synthase family. Type 1 subfamily. Homotetramer.

It is found in the cytoplasm. The enzyme catalyses L-citrulline + L-aspartate + ATP = 2-(N(omega)-L-arginino)succinate + AMP + diphosphate + H(+). The protein operates within amino-acid biosynthesis; L-arginine biosynthesis; L-arginine from L-ornithine and carbamoyl phosphate: step 2/3. This chain is Argininosuccinate synthase, found in Halalkalibacterium halodurans (strain ATCC BAA-125 / DSM 18197 / FERM 7344 / JCM 9153 / C-125) (Bacillus halodurans).